We begin with the raw amino-acid sequence, 134 residues long: Profilin-1 (134 aa).

This sequence belongs to the profilin family. Occurs in many kinds of cells as a complex with monomeric actin in a 1:1 ratio.

It localises to the cytoplasm. Its subcellular location is the cytoskeleton. Its function is as follows. Binds to actin and affects the structure of the cytoskeleton. At high concentrations, profilin prevents the polymerization of actin, whereas it enhances it at low concentrations. By binding to PIP2, it inhibits the formation of IP3 and DG. The chain is Profilin-1 (PRO1) from Nicotiana tabacum (Common tobacco).